The following is a 91-amino-acid chain: Small ribosomal subunit protein bS18 (91 aa).

It belongs to the bacterial ribosomal protein bS18 family. As to quaternary structure, part of the 30S ribosomal subunit. Forms a tight heterodimer with protein bS6.

Its function is as follows. Binds as a heterodimer with protein bS6 to the central domain of the 16S rRNA, where it helps stabilize the platform of the 30S subunit. This chain is Small ribosomal subunit protein bS18, found in Thiobacillus denitrificans (strain ATCC 25259 / T1).